Here is an 875-residue protein sequence, read N- to C-terminus: Alanine--tRNA ligase (875 aa).

4 residues coordinate Zn(2+): histidine 563, histidine 567, cysteine 665, and histidine 669.

This sequence belongs to the class-II aminoacyl-tRNA synthetase family. It depends on Zn(2+) as a cofactor.

It localises to the cytoplasm. The enzyme catalyses tRNA(Ala) + L-alanine + ATP = L-alanyl-tRNA(Ala) + AMP + diphosphate. Catalyzes the attachment of alanine to tRNA(Ala) in a two-step reaction: alanine is first activated by ATP to form Ala-AMP and then transferred to the acceptor end of tRNA(Ala). Also edits incorrectly charged Ser-tRNA(Ala) and Gly-tRNA(Ala) via its editing domain. This Shewanella pealeana (strain ATCC 700345 / ANG-SQ1) protein is Alanine--tRNA ligase.